The following is a 195-amino-acid chain: MIRKVKPQIRVLGFDDGTFSFSSKLKHEKTILIGVVMKGSLEVVGVLSRWITVDGRDVTDAMINSVNSSRFKDLRVILLKGITYAGFNVVDLERLHNETGLPVVVVVRKKPDILAMEDALRKHFRDAEERIALLRKTPPLVELVPDKLYFQTVGLDEKTAAEVIKVTTRTGFIPEPLRLAHMIASAVMTGESKRE.

The protein belongs to the UPF0215 family.

This chain is UPF0215 protein TK2033, found in Thermococcus kodakarensis (strain ATCC BAA-918 / JCM 12380 / KOD1) (Pyrococcus kodakaraensis (strain KOD1)).